Consider the following 1519-residue polypeptide: DNA (cytosine-5)-methyltransferase 4 (1519 aa).

Positions 1 to 24 (MEMETKAGKQKKRSVDSDDDVSKE) are enriched in basic and acidic residues. A disordered region spans residues 1 to 31 (MEMETKAGKQKKRSVDSDDDVSKERRPKRAA). Residue Lys583 forms a Glycyl lysine isopeptide (Lys-Gly) (interchain with G-Cter in ubiquitin) linkage. Residues 641-668 (ENVEEEELEEVEEEDENEEDDPEENELE) form a disordered region. Acidic residues predominate over residues 642 to 668 (NVEEEELEEVEEEDENEEDDPEENELE). 2 BAH domains span residues 715-849 (DVVV…FSLP) and 916-1033 (TTLK…KQFP). One can recognise an SAM-dependent MTase C5-type domain in the interval 1078-1512 (LATLDIFAGC…RKLKEALYLK (435 aa)). The active site involves Cys1183.

The protein belongs to the class I-like SAM-binding methyltransferase superfamily. C5-methyltransferase family. As to expression, expressed at low levels in vegetative and floral organs.

It is found in the nucleus. It catalyses the reaction a 2'-deoxycytidine in DNA + S-adenosyl-L-methionine = a 5-methyl-2'-deoxycytidine in DNA + S-adenosyl-L-homocysteine + H(+). Its function is as follows. Maintains chromatin CpG methylation that plays a role in genomic imprinting, regulation of embryogenesis and seed viability. Required for proper patterns of CG DNA methylation in dividing cells. This Arabidopsis thaliana (Mouse-ear cress) protein is DNA (cytosine-5)-methyltransferase 4 (MET4).